We begin with the raw amino-acid sequence, 222 residues long: Superoxide dismutase [Mn], mitochondrial (222 aa).

The N-terminal 24 residues, 1 to 24, are a transit peptide targeting the mitochondrion; the sequence is MLSRAVCGTGRQLAPALGYLGSRQ. His50 is a binding site for Mn(2+). A 3'-nitrotyrosine modification is found at Tyr58. 2 positions are modified to N6-acetyllysine; alternate: Lys68 and Lys75. N6-succinyllysine; alternate is present on residues Lys68 and Lys75. His98 provides a ligand contact to Mn(2+). Lys114 is modified (N6-acetyllysine). Lys122 and Lys130 each carry N6-acetyllysine; alternate. Lys122 and Lys130 each carry N6-succinyllysine; alternate. Mn(2+) is bound by residues Asp183 and His187. Lys202 bears the N6-acetyllysine mark.

It belongs to the iron/manganese superoxide dismutase family. In terms of assembly, homotetramer. Mn(2+) serves as cofactor. Post-translationally, nitrated under oxidative stress. Nitration coupled with oxidation inhibits the catalytic activity. In terms of processing, acetylation at Lys-122 decreases enzymatic activity. Deacetylated by SIRT3 upon exposure to ionizing radiations or after long fasting. Polyubiquitinated; leading to proteasomal degradation. Deubiquitinated by USP36 which increases protein stability.

The protein localises to the mitochondrion matrix. The catalysed reaction is 2 superoxide + 2 H(+) = H2O2 + O2. In terms of biological role, destroys superoxide anion radicals which are normally produced within the cells and which are toxic to biological systems. The sequence is that of Superoxide dismutase [Mn], mitochondrial (SOD2) from Macaca nemestrina (Pig-tailed macaque).